Consider the following 519-residue polypeptide: Membrane protein insertase YidC (519 aa).

A run of 6 helical transmembrane segments spans residues 6–26 (ILFV…FAQP), 298–318 (VDFG…VFFY), 324–344 (YGWA…PLTL), 390–410 (LGGC…FTML), 434–454 (FMQF…IGMF), and 471–491 (IMYI…SGLV).

It belongs to the OXA1/ALB3/YidC family. Type 1 subfamily. In terms of assembly, interacts with the Sec translocase complex via SecD. Specifically interacts with transmembrane segments of nascent integral membrane proteins during membrane integration.

The protein resides in the cell inner membrane. Functionally, required for the insertion and/or proper folding and/or complex formation of integral membrane proteins into the membrane. Involved in integration of membrane proteins that insert both dependently and independently of the Sec translocase complex, as well as at least some lipoproteins. Aids folding of multispanning membrane proteins. This Endomicrobium trichonymphae protein is Membrane protein insertase YidC.